We begin with the raw amino-acid sequence, 227 residues long: Cytidylate kinase (227 aa).

10–18 (GPASSGKST) provides a ligand contact to ATP.

It belongs to the cytidylate kinase family. Type 1 subfamily.

The protein localises to the cytoplasm. It carries out the reaction CMP + ATP = CDP + ADP. The catalysed reaction is dCMP + ATP = dCDP + ADP. In Streptococcus agalactiae serotype Ia (strain ATCC 27591 / A909 / CDC SS700), this protein is Cytidylate kinase.